Reading from the N-terminus, the 241-residue chain is Biosynthetic peptidoglycan transglycosylase (241 aa).

Residues 19–39 traverse the membrane as a helical segment; sequence AILAVLGVWIAGILLFSVMPV.

Belongs to the glycosyltransferase 51 family.

The protein resides in the cell inner membrane. It carries out the reaction [GlcNAc-(1-&gt;4)-Mur2Ac(oyl-L-Ala-gamma-D-Glu-L-Lys-D-Ala-D-Ala)](n)-di-trans,octa-cis-undecaprenyl diphosphate + beta-D-GlcNAc-(1-&gt;4)-Mur2Ac(oyl-L-Ala-gamma-D-Glu-L-Lys-D-Ala-D-Ala)-di-trans,octa-cis-undecaprenyl diphosphate = [GlcNAc-(1-&gt;4)-Mur2Ac(oyl-L-Ala-gamma-D-Glu-L-Lys-D-Ala-D-Ala)](n+1)-di-trans,octa-cis-undecaprenyl diphosphate + di-trans,octa-cis-undecaprenyl diphosphate + H(+). It functions in the pathway cell wall biogenesis; peptidoglycan biosynthesis. Functionally, peptidoglycan polymerase that catalyzes glycan chain elongation from lipid-linked precursors. This Cronobacter sakazakii (strain ATCC BAA-894) (Enterobacter sakazakii) protein is Biosynthetic peptidoglycan transglycosylase.